The chain runs to 1007 residues: Serine/threonine-protein kinase PRP4 homolog (1007 aa).

The tract at residues 1 to 104 is disordered; that stretch reads MAATEPPSLR…PAKRTKLDDL (104 aa). Ala-2 carries the post-translational modification N-acetylalanine. A phosphoserine mark is found at Ser-8, Ser-21, Ser-24, and Ser-33. Basic residues-rich tracts occupy residues 40–60 and 68–82; these read KHSR…KHKH and KKHK…HKRK. Over residues 83-92 the composition is skewed to basic and acidic residues; that stretch reads EVLDASDKEG. Phosphoserine occurs at positions 88 and 94. N6-acetyllysine; alternate is present on Lys-100. Lys-100 is covalently cross-linked (Glycyl lysine isopeptide (Lys-Gly) (interchain with G-Cter in SUMO2); alternate). Lys-112 is covalently cross-linked (Glycyl lysine isopeptide (Lys-Gly) (interchain with G-Cter in SUMO2)). Lys-118 participates in a covalent cross-link: Glycyl lysine isopeptide (Lys-Gly) (interchain with G-Cter in SUMO2); alternate. Residue Lys-118 forms a Glycyl lysine isopeptide (Lys-Gly) (interchain with G-Cter in SUMO1); alternate linkage. Ser-132 bears the Phosphoserine mark. Tyr-141 carries the phosphotyrosine modification. Disordered stretches follow at residues 141–535 and 560–583; these read YESG…EDEE and NISV…SPDD. 3 positions are modified to phosphoserine: Ser-143, Ser-145, and Ser-167. The span at 158–169 shows a compositional bias: low complexity; that stretch reads GNRSSTRSSSTR. Glycyl lysine isopeptide (Lys-Gly) (interchain with G-Cter in SUMO2) cross-links involve residues Lys-171 and Lys-178. Basic residues-rich tracts occupy residues 180–203 and 215–231; these read SAKK…RKSK and RSKS…SKRS. A phosphoserine mark is found at Ser-240, Ser-242, Ser-258, Ser-278, Ser-292, and Ser-294. Residues 248 to 271 show a composition bias toward basic and acidic residues; sequence RSQEKVGKARSPADEKIKSEEKGK. Positions 294–303 are enriched in basic and acidic residues; that stretch reads SPVDLRDKSK. Positions 304-315 are enriched in basic residues; sequence DRRSRSKERKSK. A compositionally biased stretch (basic and acidic residues) spans 316–325; that stretch reads RSEIDKEKKP. Residues Ser-328, Ser-354, Ser-356, Ser-366, and Ser-368 each carry the phosphoserine modification. Positions 342-367 are enriched in basic residues; it reads PSRRPGRSPKRRSLSPKQRDKSRRSR. Thr-385 is subject to Phosphothreonine. Ser-387 bears the Phosphoserine mark. Composition is skewed to basic and acidic residues over residues 395 to 408 and 415 to 429; these read RSLE…ERRR and RPRD…RSKD. Residues Ser-427, Ser-431, and Ser-437 each carry the phosphoserine modification. Residues 438–497 are compositionally biased toward basic residues; sequence PSRRRSRSPIRRRSRSPLRRSRSPRRRSRSPRRRDRSRRSRSRLRRRSRSRGGHRRRSRS. Ser-518, Ser-519, Ser-520, Ser-565, Ser-569, Ser-576, Ser-578, and Ser-580 each carry phosphoserine. Residues 518–535 show a composition bias toward acidic residues; the sequence is SSSDDNLEDFDVEEEDEE. Positions 562 to 581 are enriched in low complexity; that stretch reads SVPSEPSSPQSSTRSRSPSP. Residues Lys-593 and Lys-659 each participate in a glycyl lysine isopeptide (Lys-Gly) (interchain with G-Cter in SUMO2) cross-link. The region spanning 687–1003 is the Protein kinase domain; the sequence is YNVYGYTGQG…INQALQHAFI (317 aa). Residues 693–701 and Lys-717 each bind ATP; that span reads TGQGVFSNV. An N6-acetyllysine modification is found at Lys-717. Asp-815 (proton acceptor) is an active-site residue. Tyr-849 bears the Phosphotyrosine mark. Position 852 is a phosphoserine (Ser-852).

This sequence belongs to the protein kinase superfamily. CMGC Ser/Thr protein kinase family. As to quaternary structure, interacts with CLK1 C-terminus. Associates with the U5 snRNP and NCOR1 deacetylase complexes. Identified in the spliceosome C complex. Phosphorylated by CLK1. Autophosphorylated; phosphorylation inhibits interaction with its targets, such as PRPF6 or SMARCA4.

The protein resides in the nucleus. Its subcellular location is the chromosome. It is found in the centromere. The protein localises to the kinetochore. It catalyses the reaction L-seryl-[protein] + ATP = O-phospho-L-seryl-[protein] + ADP + H(+). The catalysed reaction is L-threonyl-[protein] + ATP = O-phospho-L-threonyl-[protein] + ADP + H(+). Functionally, serine/threonine kinase involved in spliceosomal assembly as well as mitosis and signaling regulation. Connects chromatin mediated regulation of transcription and pre-mRNA splicing. During spliceosomal assembly, interacts with and phosphorylates PRPF6 and PRPF31, components of the U4/U6-U5 tri-small nuclear ribonucleoprotein (snRNP), to facilitate the formation of the spliceosome B complex. Plays a role in regulating transcription and the spindle assembly checkpoint (SAC). Associates with U5 snRNP and NCOR1 deacetylase complexes which may allow a coordination of pre-mRNA splicing with chromatin remodeling events involved in transcriptional regulation. Associates and probably phosphorylates SMARCA4 and NCOR1. Phosphorylates SRSF1. Associates with kinetochores during mitosis and is necessary for recruitment and maintenance of the checkpoint proteins such as MAD1L1 and MAD12L1 at the kinetochores. Phosphorylates and regulates the activity of the transcription factors such as ELK1 and KLF13. Phosphorylates nuclear YAP1 and WWTR1/TAZ which induces nuclear exclusion and regulates Hippo signaling pathway, involved in tissue growth control. In Rattus norvegicus (Rat), this protein is Serine/threonine-protein kinase PRP4 homolog (Prp4k).